A 254-amino-acid chain; its full sequence is PF03932 family protein CutC (254 aa).

It belongs to the CutC family.

It is found in the cytoplasm. This Yersinia enterocolitica serotype O:8 / biotype 1B (strain NCTC 13174 / 8081) protein is PF03932 family protein CutC.